Here is a 206-residue protein sequence, read N- to C-terminus: Large ribosomal subunit protein uL4 (206 aa).

The interval Gly-46–Thr-77 is disordered.

This sequence belongs to the universal ribosomal protein uL4 family. In terms of assembly, part of the 50S ribosomal subunit.

One of the primary rRNA binding proteins, this protein initially binds near the 5'-end of the 23S rRNA. It is important during the early stages of 50S assembly. It makes multiple contacts with different domains of the 23S rRNA in the assembled 50S subunit and ribosome. Functionally, forms part of the polypeptide exit tunnel. In Paracidovorax citrulli (strain AAC00-1) (Acidovorax citrulli), this protein is Large ribosomal subunit protein uL4.